Here is a 640-residue protein sequence, read N- to C-terminus: ESX-3 secretion system protein EccA3 (640 aa).

Glycine 393–threonine 400 serves as a coordination point for ATP.

This sequence belongs to the CbxX/CfxQ family. As to quaternary structure, part of the ESX-3 / type VII secretion system (T7SS), which is composed of cytosolic and membrane components.

Its subcellular location is the cytoplasm. Its function is as follows. Part of an ESX-3 / type VII specialized secretion system (T7SS), which exports several proteins. EccA3 exhibits ATPase activity and may provide energy for the export of ESX-3 substrates. The sequence is that of ESX-3 secretion system protein EccA3 from Mycobacterium leprae (strain TN).